We begin with the raw amino-acid sequence, 483 residues long: ATP-dependent protease ATPase subunit HslU (483 aa).

ATP is bound by residues Val18 and 60 to 65 (GVGKTE). Low complexity-rich tracts occupy residues 136 to 147 (LPGGAPQPAPAQ) and 171 to 181 (AQADASQASPP). The segment at 136 to 212 (LPGGAPQPAP…HGGKLDDREV (77 aa)) is disordered. Positions 182–191 (TGTGSAPDSR) are enriched in polar residues. The span at 192 to 209 (SSTREKLRTLWHGGKLDD) shows a compositional bias: basic and acidic residues. ATP-binding residues include Asp296, Glu361, and Arg433.

Belongs to the ClpX chaperone family. HslU subfamily. In terms of assembly, a double ring-shaped homohexamer of HslV is capped on each side by a ring-shaped HslU homohexamer. The assembly of the HslU/HslV complex is dependent on binding of ATP.

It is found in the cytoplasm. In terms of biological role, ATPase subunit of a proteasome-like degradation complex; this subunit has chaperone activity. The binding of ATP and its subsequent hydrolysis by HslU are essential for unfolding of protein substrates subsequently hydrolyzed by HslV. HslU recognizes the N-terminal part of its protein substrates and unfolds these before they are guided to HslV for hydrolysis. In Nitratidesulfovibrio vulgaris (strain DSM 19637 / Miyazaki F) (Desulfovibrio vulgaris), this protein is ATP-dependent protease ATPase subunit HslU.